The primary structure comprises 1172 residues: MLMSRTDSKSGKNRSGVRMFKDGDFLTPASGESWDRLRLTCSQPFTRHQSFGLAFLRVRSSLGSLADPVVDPSAPGSSGLNQNSTDVLESDPRPWLTNPSIRRTFFPDPQTSTKEISELKGMLKQLQPGPLGRAARMVLSAARKAPPASVVSPNNSHGEPGPSRAESAEPRAEEPNRKTAVGRRKRRKVQEPRRSLSNSSSQPNRRTGRTRQRQHRPQTKSDDGGVQAAGQCPICAGFFSIETLPQHAATCGESPPPQPASPASLSSSESVLRRHHVALTPVPLVPKPQPNWTEIVNKKLKFPPTLLRAIQEGQLGLVQQLLESSSDASGAGPGGPLRNVEESEDRSWREALNLAIRLGHEVITDVLLANVKFDFRQIHEALLVAVDTNQPAVVRRLLARLEREKGRKVDTKSFSLAFFDSSIDGSRFAPGVTPLTLACQKDLYEIAQLLMDQGHTIARPHPVSCACLECSNARRYDLLKFSLSRINTYRGIASRAHLSLASEDAMLAAFQLSRELRRLARKEPEFKPQYIALESLCQDYGFELLGMCRNQSEVTAVLNDLGEDSETEPEAEGLGQAFEEGIPNLARLRLAVNYNQKQFVAHPICQQVLSSIWCGNLAGWRGSTTIWKLFVAFLIFLTMPFLCIGYWLAPKSQLGRLLKIPVLKFLLHSASYLWFLIFLLGESLVMETQLSTFKGRSQSVWETSLHMIWVTGFLWFECKEVWIEGLRSYLLDWWNFLDVVILSLYLASFALRLLLAGLAYMHCRDASDSTTCRYFTTAERSEWRTEDPQFLAEVLFAVTSMLSFTRLAYILPAHESLGTLQISIGKMIDDMIRFMFILMIILTAFLCGLNNIYVPYQESEKLGNFNETFQFLFWTMFGMEEHTVVDMPQFLVPEFVGRAMYGIFTIVMVIVLLNMLIAMITNSFQKIEDDADVEWKFARSKLYLSYFREGLTLPVPFNILPSPKAAFYLVRRIFRFLCCGSSCCKAKKSDYPPIGTFTNPGARAGSAGEGERVSYRLRVIKALVQRYIETARREFEETRRKDLGNRLTELTKTVSRLQSEVASVQKNLAAGGAPRPPDGASILSRYITRVRNSFQNLGPPTSDTPAELTMPGIVETEVSLGDGLDGTGEAGAPAPGEPGSSSSAHVLVHREQEAEGSGDLLLEGDLETKGES.

Residues 1–10 (MLMSRTDSKS) show a composition bias toward basic and acidic residues. Disordered stretches follow at residues 1 to 22 (MLMS…MFKD), 69 to 98 (VVDP…WLTN), 140 to 227 (SAAR…GGVQ), and 249 to 271 (ATCG…SESV). Topologically, residues 1–659 (MLMSRTDSKS…PKSQLGRLLK (659 aa)) are cytoplasmic. The span at 75-87 (PGSSGLNQNSTDV) shows a compositional bias: polar residues. Residues 166–177 (ESAEPRAEEPNR) show a composition bias toward basic and acidic residues. A compositionally biased stretch (polar residues) spans 195 to 204 (SLSNSSSQPN). The span at 206-218 (RTGRTRQRQHRPQ) shows a compositional bias: basic residues. Positions 261–270 (SPASLSSSES) are enriched in low complexity. ANK repeat units lie at residues 301–330 (KFPP…DASG), 377–406 (QIHE…REKG), and 430–459 (PGVT…TIAR). Residues 660–680 (IPVLKFLLHSASYLWFLIFLL) traverse the membrane as a helical segment. Topologically, residues 681 to 702 (GESLVMETQLSTFKGRSQSVWE) are extracellular. Residues 703-723 (TSLHMIWVTGFLWFECKEVWI) traverse the membrane as a helical segment. Residues 724-738 (EGLRSYLLDWWNFLD) are Cytoplasmic-facing. The helical transmembrane segment at 739–759 (VVILSLYLASFALRLLLAGLA) threads the bilayer. The Extracellular portion of the chain corresponds to 760–789 (YMHCRDASDSTTCRYFTTAERSEWRTEDPQ). Residues 790 to 810 (FLAEVLFAVTSMLSFTRLAYI) form a helical membrane-spanning segment. The Cytoplasmic segment spans residues 811 to 833 (LPAHESLGTLQISIGKMIDDMIR). Residues 834 to 854 (FMFILMIILTAFLCGLNNIYV) form a helical membrane-spanning segment. Over 855–899 (PYQESEKLGNFNETFQFLFWTMFGMEEHTVVDMPQFLVPEFVGRA) the chain is Extracellular. A helical transmembrane segment spans residues 900–920 (MYGIFTIVMVIVLLNMLIAMI). Over 921 to 1172 (TNSFQKIEDD…EGDLETKGES (252 aa)) the chain is Cytoplasmic. Positions 1118–1172 (VSLGDGLDGTGEAGAPAPGEPGSSSSAHVLVHREQEAEGSGDLLLEGDLETKGES) are disordered. Residues 1130–1144 (AGAPAPGEPGSSSSA) are compositionally biased toward low complexity.

This sequence belongs to the transient receptor (TC 1.A.4) family. STrpC subfamily. TRPC2 sub-subfamily. In terms of tissue distribution, isoform 3 is ubiquitously expressed at low levels. Isoform 4 is expressed exclusively in vomeronasal organ.

Its subcellular location is the membrane. In terms of biological role, thought to form a receptor-activated non-selective calcium permeant cation channel. Probably is operated by a phosphatidylinositol second messenger system activated by receptor tyrosine kinases or G-protein coupled receptors. May also be activated by intracellular calcium store depletion. Plays a role in mediating responsivity to pheromones that elicit aggressive and mating behaviors. Required for response to the Esp1 pheromone which enhances female sexual receptive behavior and to the Esp22 pheromone which inhibits adult male mating behavior. In Mus musculus (Mouse), this protein is Short transient receptor potential channel 2 (Trpc2).